The following is a 100-amino-acid chain: Tachykinin-4 (100 aa).

A signal peptide spans 1–19; sequence MPSSVTLLLLMGLSVCTSA. 2 consecutive propeptides follow at residues 20–55 and 85–100; these read EDGG…LQEV and RASS…QGAE. Residues 80–100 form a disordered region; it reads GLLGRRASSTKGSVDEDQGAE.

It belongs to the tachykinin family.

Its subcellular location is the secreted. Its function is as follows. Tachykinins are active peptides which excite neurons, evoke behavioral responses, are potent vasodilators and secretagogues, and contract (directly or indirectly) many smooth muscles. The sequence is that of Tachykinin-4 from Oryctolagus cuniculus (Rabbit).